The following is a 1242-amino-acid chain: Protein jagged-1a (1242 aa).

Residues 1 to 28 form the signal peptide; it reads MILRPSATFAALSAHVLLRCLWMRVCEA. At 29–1070 the chain is on the extracellular side; it reads SGHFEMQVLS…KQPQNPNVDY (1042 aa). The N-linked (GlcNAc...) asparagine glycan is linked to Asn141. Positions 186 to 230 constitute a DSL domain; sequence VTCDEHYFGFGCNKFCRPRDDFFGHYTCDHNGNKTCLEGWAGPEC. Disulfide bonds link Cys188–Cys197 and Cys201–Cys213. A glycan (N-linked (GlcNAc...) asparagine) is linked at Asn218. Cystine bridges form between Cys221–Cys230, Cys235–Cys246, Cys239–Cys252, Cys254–Cys263, Cys266–Cys277, Cys272–Cys283, Cys285–Cys294, Cys301–Cys313, Cys307–Cys323, Cys325–Cys334, Cys341–Cys352, Cys346–Cys361, Cys363–Cys372, Cys379–Cys390, Cys384–Cys399, Cys401–Cys410, Cys417–Cys428, Cys422–Cys437, Cys439–Cys448, Cys455–Cys465, Cys459–Cys474, Cys476–Cys485, Cys492–Cys503, Cys497–Cys512, Cys514–Cys523, Cys530–Cys541, Cys535–Cys550, Cys552–Cys561, Cys600–Cys618, Cys620–Cys629, Cys636–Cys647, Cys641–Cys656, Cys658–Cys667, Cys674–Cys685, Cys679–Cys694, Cys696–Cys705, Cys712–Cys723, Cys717–Cys732, and Cys734–Cys743. Residues 231–264 form the EGF-like 1 domain; it reads NTAICKQGCSIEHGSCKVPGNCRCLYGWQGEYCD. The EGF-like 2; atypical domain occupies 265-295; that stretch reads QCIPHPGCVHGTCIEPWQCLCDTNWGGQLCD. EGF-like domains follow at residues 297–335 and 337–373; these read DLNT…QNCE and ADNA…PSCN. Positions 375–411 constitute an EGF-like 5; calcium-binding domain; that stretch reads NEDDCSPNPCNHSGVCVDLVDGFKCICPVQWTGKTCL. N-linked (GlcNAc...) asparagine glycosylation occurs at Asn385. One can recognise an EGF-like 6; calcium-binding domain in the interval 413–449; sequence DANECEESPCVNAHSCRNLIGGYFCECLPGWTGQNCD. An EGF-like 7; calcium-binding domain is found at 451–486; it reads NVNDCHGQCLNGGLCKDLVNGYRCVCAAGFAGDRCE. The region spanning 488 to 524 is the EGF-like 8; calcium-binding domain; the sequence is DVDECASRPCLNGGRCQDTLNGFQCLCPPGFSGATCQ. EGF-like domains lie at 526–562 and 575–630; these read DLDY…KNCS and VIDS…TYCH. Asn560 carries an N-linked (GlcNAc...) asparagine glycan. Positions 632–668 constitute an EGF-like 11; calcium-binding domain; sequence NINDCESSPCLSGGTCIDKINAYQCICADGWEGPNCE. The region spanning 670–706 is the EGF-like 12; calcium-binding domain; that stretch reads NIDDCRTNPCRDRGVCRDLVNDFYCECENGWKGKTCH. EGF-like domains are found at residues 708-744 and 747-783; these read RESQ…ATCN and KNSS…PTCS. A glycan (N-linked (GlcNAc...) asparagine) is linked at Asn748. 9 disulfides stabilise this stretch: Cys751–Cys762, Cys756–Cys771, Cys773–Cys782, Cys789–Cys800, Cys794–Cys809, Cys811–Cys820, Cys827–Cys838, Cys832–Cys847, and Cys849–Cys858. An EGF-like 15; calcium-binding domain is found at 785-821; that stretch reads NSNDCNPQPCYNSGTCVDGDNWYRCECASGFAGPDCR. An EGF-like 16; calcium-binding domain is found at 823–859; sequence NINECQSSPCAFGSTCVDEINGYRCLCPPGRTGPRCQ. In terms of domain architecture, EGF-like 17 spans 917–959; that stretch reads TGQLCVPVRDEQCFVKPCSSQGECWSAHRPAVRTHCQPDSHCA. Asn960, Asn991, and Asn1046 each carry an N-linked (GlcNAc...) asparagine glycan. The helical transmembrane segment at 1071–1095 threads the bilayer; sequence MVPLLVSVVTAIWVLALASVFLWCI. Residues 1096 to 1242 are Cytoplasmic-facing; the sequence is RHHRKQSSSA…HSLQKMEYIV (147 aa). A disordered region spans residues 1191 to 1242; that stretch reads RDDRLSSNGTDIKKHPQWTNKRDNRDLESQHRVPDSQHRDSQHSLQKMEYIV. Positions 1210 to 1232 are enriched in basic and acidic residues; the sequence is NKRDNRDLESQHRVPDSQHRDSQ.

It is found in the membrane. It localises to the cell membrane. Ligand for multiple Notch receptors and involved in the mediation of Notch signaling. Seems to be involved in cell-fate decisions. The polypeptide is Protein jagged-1a (jag1a) (Danio rerio (Zebrafish)).